A 437-amino-acid polypeptide reads, in one-letter code: Nuclear distribution protein PAC1 (437 aa).

The stretch at 64 to 94 (LSVIRLQRKVMDLETRLEAAEREASSTHKAN) forms a coiled coil. WD repeat units follow at residues 114-153 (LHKQPVNAVSFHPFHSTLASACEDGNIRIWDYELGEIETT), 156-217 (AHTR…ANVK), 221-260 (GHDHTISAVKFTASGNHVISASRDKTVRVWSVQSGYCVRT), 263-301 (GHTDWVKSCAALNEEFIFSAGIDHVTRVSEFVSGDGKMT), 304-356 (GHEH…LLIL), 358-397 (GHDNWVRGVVLHPAGRYLVSVSDDKTMRCWDLEQGGRCIR), and 401-437 (AHGHFVTCVAWAPNDVNGRVRCLVATGGVDGQVKVWQ). Positions 165–186 (DFSQPDTGASRDKSHDKPRADV) are disordered. Residues 173–186 (ASRDKSHDKPRADV) show a composition bias toward basic and acidic residues.

The protein belongs to the WD repeat LIS1/nudF family. Self-associates. Interacts with NDL1 and dynein.

The protein localises to the cytoplasm. It localises to the cytoskeleton. It is found in the spindle pole. Its function is as follows. Positively regulates the activity of the minus-end directed microtubule motor protein dynein. Plays a central role in positioning the mitotic spindle at the bud neck during cell division. Targets cytoplasmic dynein to microtubule plus ends, thereby promoting dynein-mediated microtubule sliding along the bud cortex and consequently the movement of the mitotic spindle to the bud neck. This is Nuclear distribution protein PAC1 from Yarrowia lipolytica (strain CLIB 122 / E 150) (Yeast).